The chain runs to 337 residues: Holliday junction branch migration complex subunit RuvB (337 aa).

The tract at residues methionine 1–tyrosine 179 is large ATPase domain (RuvB-L). ATP is bound by residues leucine 18, arginine 19, glycine 60, lysine 63, threonine 64, serine 65, glutamate 126 to phenylalanine 128, arginine 169, tyrosine 179, and arginine 216. Threonine 64 serves as a coordination point for Mg(2+). Residues serine 180–leucine 250 are small ATPAse domain (RuvB-S). The interval aspartate 253–glutamine 337 is head domain (RuvB-H). Residues lysine 308 and arginine 313 each contribute to the DNA site.

It belongs to the RuvB family. In terms of assembly, homohexamer. Forms an RuvA(8)-RuvB(12)-Holliday junction (HJ) complex. HJ DNA is sandwiched between 2 RuvA tetramers; dsDNA enters through RuvA and exits via RuvB. An RuvB hexamer assembles on each DNA strand where it exits the tetramer. Each RuvB hexamer is contacted by two RuvA subunits (via domain III) on 2 adjacent RuvB subunits; this complex drives branch migration. In the full resolvosome a probable DNA-RuvA(4)-RuvB(12)-RuvC(2) complex forms which resolves the HJ.

The protein localises to the cytoplasm. It catalyses the reaction ATP + H2O = ADP + phosphate + H(+). Functionally, the RuvA-RuvB-RuvC complex processes Holliday junction (HJ) DNA during genetic recombination and DNA repair, while the RuvA-RuvB complex plays an important role in the rescue of blocked DNA replication forks via replication fork reversal (RFR). RuvA specifically binds to HJ cruciform DNA, conferring on it an open structure. The RuvB hexamer acts as an ATP-dependent pump, pulling dsDNA into and through the RuvAB complex. RuvB forms 2 homohexamers on either side of HJ DNA bound by 1 or 2 RuvA tetramers; 4 subunits per hexamer contact DNA at a time. Coordinated motions by a converter formed by DNA-disengaged RuvB subunits stimulates ATP hydrolysis and nucleotide exchange. Immobilization of the converter enables RuvB to convert the ATP-contained energy into a lever motion, pulling 2 nucleotides of DNA out of the RuvA tetramer per ATP hydrolyzed, thus driving DNA branch migration. The RuvB motors rotate together with the DNA substrate, which together with the progressing nucleotide cycle form the mechanistic basis for DNA recombination by continuous HJ branch migration. Branch migration allows RuvC to scan DNA until it finds its consensus sequence, where it cleaves and resolves cruciform DNA. The protein is Holliday junction branch migration complex subunit RuvB of Chlamydia pneumoniae (Chlamydophila pneumoniae).